The primary structure comprises 303 residues: Methionyl-tRNA formyltransferase (303 aa).

Residue 111 to 114 (SLLP) participates in (6S)-5,6,7,8-tetrahydrofolate binding.

It belongs to the Fmt family.

It carries out the reaction L-methionyl-tRNA(fMet) + (6R)-10-formyltetrahydrofolate = N-formyl-L-methionyl-tRNA(fMet) + (6S)-5,6,7,8-tetrahydrofolate + H(+). Its function is as follows. Attaches a formyl group to the free amino group of methionyl-tRNA(fMet). The formyl group appears to play a dual role in the initiator identity of N-formylmethionyl-tRNA by promoting its recognition by IF2 and preventing the misappropriation of this tRNA by the elongation apparatus. The sequence is that of Methionyl-tRNA formyltransferase from Ehrlichia chaffeensis (strain ATCC CRL-10679 / Arkansas).